The chain runs to 112 residues: Putative movement protein (112 aa).

Residues isoleucine 27–cysteine 47 traverse the membrane as a helical segment. The interval threonine 77–serine 112 is disordered. Over residues threonine 84–glutamate 98 the composition is skewed to basic and acidic residues. Residues asparagine 101–serine 112 are compositionally biased toward polar residues.

It belongs to the nanovirus movement protein family.

It is found in the host cell membrane. Its function is as follows. May transport viral genome to neighboring plant cells directly through plasmosdesmata, without any budding. The movement protein allows efficient cell to cell propagation, by bypassing the host cell wall barrier. The chain is Putative movement protein (DNA-M) from Subterranean clover stunt virus (strain F) (SCSV).